We begin with the raw amino-acid sequence, 1527 residues long: DNA-directed RNA polymerase subunit beta'' (1527 aa).

Residues Cys-220, Cys-296, Cys-303, and Cys-306 each contribute to the Zn(2+) site. Basic and acidic residues-rich tracts occupy residues 644–661 and 671–681; these read RTQEEEYRTREEEYRTRE and PENKYRTREGE. 2 disordered regions span residues 644 to 681 and 712 to 793; these read RTQEEEYRTREEEYRTREEDSEDEYESPENKYRTREGE and YRTL…KKEG. Composition is skewed to acidic residues over residues 737–755 and 763–786; these read GEYEILEEESEEEYGSSED and TLEEDSEEDSEEDSEDEYGSPEED.

The protein belongs to the RNA polymerase beta' chain family. RpoC2 subfamily. In terms of assembly, in plastids the minimal PEP RNA polymerase catalytic core is composed of four subunits: alpha, beta, beta', and beta''. When a (nuclear-encoded) sigma factor is associated with the core the holoenzyme is formed, which can initiate transcription. Zn(2+) is required as a cofactor.

It localises to the plastid. Its subcellular location is the chloroplast. It carries out the reaction RNA(n) + a ribonucleoside 5'-triphosphate = RNA(n+1) + diphosphate. In terms of biological role, DNA-dependent RNA polymerase catalyzes the transcription of DNA into RNA using the four ribonucleoside triphosphates as substrates. The sequence is that of DNA-directed RNA polymerase subunit beta'' from Zea mays (Maize).